The primary structure comprises 347 residues: Protein RecA (347 aa).

67–74 is a binding site for ATP; the sequence is GPESSGKT. The disordered stretch occupies residues 326 to 347; the sequence is DKLLPGRAPSSEAQGTESGQEA. Over residues 336 to 347 the composition is skewed to polar residues; that stretch reads SEAQGTESGQEA.

This sequence belongs to the RecA family.

It is found in the cytoplasm. Functionally, can catalyze the hydrolysis of ATP in the presence of single-stranded DNA, the ATP-dependent uptake of single-stranded DNA by duplex DNA, and the ATP-dependent hybridization of homologous single-stranded DNAs. It interacts with LexA causing its activation and leading to its autocatalytic cleavage. The chain is Protein RecA from Alkalilimnicola ehrlichii (strain ATCC BAA-1101 / DSM 17681 / MLHE-1).